A 253-amino-acid chain; its full sequence is Coenzyme F420:L-glutamate ligase (253 aa).

Residues 9–12, 38–39, and Lys-43 each bind GTP; these read LPEI and ST. Asp-113 is an a divalent metal cation binding site. GTP is bound at residue Asn-116. Asp-150, Thr-151, and Glu-208 together coordinate a divalent metal cation. 206–213 serves as a coordination point for GTP; the sequence is SGEGDDGT.

Belongs to the CofE family. Homodimer. The cofactor is Mg(2+). It depends on Mn(2+) as a cofactor. Requires K(+) as cofactor.

It carries out the reaction oxidized coenzyme F420-0 + GTP + L-glutamate = oxidized coenzyme F420-1 + GDP + phosphate + H(+). The catalysed reaction is oxidized coenzyme F420-1 + GTP + L-glutamate = oxidized coenzyme F420-2 + GDP + phosphate + H(+). It participates in cofactor biosynthesis; coenzyme F420 biosynthesis. Catalyzes the GTP-dependent successive addition of two or more gamma-linked L-glutamates to the L-lactyl phosphodiester of 7,8-didemethyl-8-hydroxy-5-deazariboflavin (F420-0) to form coenzyme F420-0-glutamyl-glutamate (F420-2) or polyglutamated F420 derivatives. In Halobacterium salinarum (strain ATCC 29341 / DSM 671 / R1), this protein is Coenzyme F420:L-glutamate ligase.